Here is a 217-residue protein sequence, read N- to C-terminus: tRNA (guanine-N(7)-)-methyltransferase (217 aa).

Residues E44, E69, D96, and D118 each contribute to the S-adenosyl-L-methionine site. The active site involves D118. Substrate-binding positions include K122, D154, and 191-194 (TEYE).

This sequence belongs to the class I-like SAM-binding methyltransferase superfamily. TrmB family.

It carries out the reaction guanosine(46) in tRNA + S-adenosyl-L-methionine = N(7)-methylguanosine(46) in tRNA + S-adenosyl-L-homocysteine. Its pathway is tRNA modification; N(7)-methylguanine-tRNA biosynthesis. Functionally, catalyzes the formation of N(7)-methylguanine at position 46 (m7G46) in tRNA. The polypeptide is tRNA (guanine-N(7)-)-methyltransferase (Bacillus cereus (strain G9842)).